A 348-amino-acid polypeptide reads, in one-letter code: Peptide-N(4)-(N-acetyl-beta-glucosaminyl)asparagine amidase (348 aa).

Zn(2+) is bound by residues cysteine 116, cysteine 119, cysteine 151, and cysteine 154. Cysteine 177 functions as the Nucleophile in the catalytic mechanism. Active-site residues include histidine 204 and aspartate 221. Glutamate 224 provides a ligand contact to substrate. Positions 311–348 (PSATPTKEMQKLKISKTGNKGRISGSAEWKESRGENGK) are disordered. The span at 338-348 (EWKESRGENGK) shows a compositional bias: basic and acidic residues.

The protein belongs to the transglutaminase-like superfamily. PNGase family. The cofactor is Zn(2+).

The protein resides in the cytoplasm. It catalyses the reaction Hydrolysis of an N(4)-(acetyl-beta-D-glucosaminyl)asparagine residue in which the glucosamine residue may be further glycosylated, to yield a (substituted) N-acetyl-beta-D-glucosaminylamine and a peptide containing an aspartate residue.. In terms of biological role, specifically deglycosylates the denatured form of N-linked glycoproteins in the cytoplasm and assists their proteasome-mediated degradation. Cleaves the beta-aspartyl-glucosamine (GlcNAc) of the glycan and the amide side chain of Asn, converting Asn to Asp. Prefers proteins containing high-mannose over those bearing complex type oligosaccharides. Can recognize misfolded proteins in the endoplasmic reticulum that are exported to the cytosol to be destroyed and deglycosylate them, while it has no activity toward native proteins. Deglycosylation is a prerequisite for subsequent proteasome-mediated degradation of some, but not all, misfolded glycoproteins. The chain is Peptide-N(4)-(N-acetyl-beta-glucosaminyl)asparagine amidase (PNG1) from Candida glabrata (strain ATCC 2001 / BCRC 20586 / JCM 3761 / NBRC 0622 / NRRL Y-65 / CBS 138) (Yeast).